We begin with the raw amino-acid sequence, 206 residues long: Small ribosomal subunit protein uS2 (206 aa).

The protein belongs to the universal ribosomal protein uS2 family.

The sequence is that of Small ribosomal subunit protein uS2 from Methanothrix thermoacetophila (strain DSM 6194 / JCM 14653 / NBRC 101360 / PT) (Methanosaeta thermophila).